We begin with the raw amino-acid sequence, 259 residues long: HTH-type quorum sensing-dependent transcriptional regulator VjbR (259 aa).

A C12-HSL binding region spans residues 76-179 (KNYFAIDPVF…AGIIHGTVCG (104 aa)). Positions 183–248 (ANSVASLLTP…SAVATALSLG (66 aa)) constitute an HTH luxR-type domain. The H-T-H motif DNA-binding region spans 207–226 (DGEIAEILSIARWTVVTYLQ).

Its function is as follows. Transcriptional regulator involved in the global control of Brucella gene expression. Mediates the effects of the quorum sensing autoinducer C12-HSL (N-dodecanoyl-homoserine lactone) on a large and diverse number of genes. This Brucella suis biovar 1 (strain 1330) protein is HTH-type quorum sensing-dependent transcriptional regulator VjbR (vjbR).